The chain runs to 749 residues: uncharacterized protein (749 aa).

Disordered stretches follow at residues 1-58 (MGTV…QPSN), 124-170 (DANA…PSPL), 200-291 (SRFS…PPVS), and 385-405 (YTWS…NPST). Over residues 13–24 (LNNGLSSNNGSS) the composition is skewed to low complexity. 4 stretches are compositionally biased toward polar residues: residues 149 to 159 (KSASKDSNAFN), 238 to 252 (ESKT…PSLN), 265 to 275 (LNYQNSSLNPS), and 388 to 405 (SRHS…NPST). The PSP1 C-terminal domain maps to 644–729 (KRILRKAQPH…YKTRIWMCAV (86 aa)).

This is an uncharacterized protein from Schizosaccharomyces pombe (strain 972 / ATCC 24843) (Fission yeast).